Here is a 222-residue protein sequence, read N- to C-terminus: PKHD-type hydroxylase PCC8801_2196 (222 aa).

In terms of domain architecture, Fe2OG dioxygenase spans 78–175 (RIHSLLFSRY…RLVVVGWIES (98 aa)). Residues histidine 96, aspartate 98, and histidine 156 each coordinate Fe cation. Arginine 166 is a 2-oxoglutarate binding site.

It depends on Fe(2+) as a cofactor. L-ascorbate serves as cofactor.

This is PKHD-type hydroxylase PCC8801_2196 from Rippkaea orientalis (strain PCC 8801 / RF-1) (Cyanothece sp. (strain PCC 8801)).